A 227-amino-acid polypeptide reads, in one-letter code: Cytidylate kinase (227 aa).

An ATP-binding site is contributed by 12 to 20; it reads GPSGAGKGT.

It belongs to the cytidylate kinase family. Type 1 subfamily.

The protein resides in the cytoplasm. It carries out the reaction CMP + ATP = CDP + ADP. The catalysed reaction is dCMP + ATP = dCDP + ADP. This is Cytidylate kinase from Salmonella arizonae (strain ATCC BAA-731 / CDC346-86 / RSK2980).